Here is an 89-residue protein sequence, read N- to C-terminus: Small ribosomal subunit protein uS15 (89 aa).

It belongs to the universal ribosomal protein uS15 family. In terms of assembly, part of the 30S ribosomal subunit. Forms a bridge to the 50S subunit in the 70S ribosome, contacting the 23S rRNA.

One of the primary rRNA binding proteins, it binds directly to 16S rRNA where it helps nucleate assembly of the platform of the 30S subunit by binding and bridging several RNA helices of the 16S rRNA. In terms of biological role, forms an intersubunit bridge (bridge B4) with the 23S rRNA of the 50S subunit in the ribosome. The polypeptide is Small ribosomal subunit protein uS15 (Phocaeicola vulgatus (strain ATCC 8482 / DSM 1447 / JCM 5826 / CCUG 4940 / NBRC 14291 / NCTC 11154) (Bacteroides vulgatus)).